Reading from the N-terminus, the 106-residue chain is Urease subunit beta (106 aa).

It belongs to the urease beta subunit family. As to quaternary structure, heterotrimer of UreA (gamma), UreB (beta) and UreC (alpha) subunits. Three heterotrimers associate to form the active enzyme.

The protein resides in the cytoplasm. The enzyme catalyses urea + 2 H2O + H(+) = hydrogencarbonate + 2 NH4(+). It participates in nitrogen metabolism; urea degradation; CO(2) and NH(3) from urea (urease route): step 1/1. The protein is Urease subunit beta of Synechococcus sp. (strain WH7805).